The primary structure comprises 116 residues: uncharacterized protein (116 aa).

In terms of domain architecture, VOC spans 5 to 113 (EVKMVVLSTE…TGNGLVFYSP (109 aa)). Residue Lys-76 forms an Isoglutamyl lysine isopeptide (Lys-Gln) (interchain with Q-Cter in protein Pup) linkage.

This is an uncharacterized protein from Mycolicibacterium smegmatis (strain ATCC 700084 / mc(2)155) (Mycobacterium smegmatis).